Reading from the N-terminus, the 196-residue chain is Large ribosomal subunit protein uL6 (196 aa).

Belongs to the universal ribosomal protein uL6 family. As to quaternary structure, part of the 50S ribosomal subunit.

Its function is as follows. This protein binds to the 23S rRNA, and is important in its secondary structure. It is located near the subunit interface in the base of the L7/L12 stalk, and near the tRNA binding site of the peptidyltransferase center. In Pyrobaculum aerophilum (strain ATCC 51768 / DSM 7523 / JCM 9630 / CIP 104966 / NBRC 100827 / IM2), this protein is Large ribosomal subunit protein uL6.